The primary structure comprises 338 residues: MESRQDITNQEELWKMKPRKNLEDDYLNEDSRENSMPKRPMLVHLHQTAHFDEFDCPPELQHKQELFPKWHLPIKIAAIVSSLTFLYTLLREVIHPFVTSHQQYFYKIPILVINKVLPMVSITLLALVYLPGVIAAIVQLHNGTKYKKFPHWLDRWMVTRKQFGLLSFFFAVLHAVYSLSYPMRRSYRYKLLNWAYQQVQQNKEDAWIEHDVWRMEIYVSLGIVTLAILALLAVTSIPSVSDSLTWREFHYIQSTLGIVSLLLGTIHALIFAWNKWVDIKQFIWYTPPTFMIAVFLPTVVLICKVILLLPCLRRKILKIRHGWEDVTKINKTEMSSQL.

2 helical membrane passes run 70–90 and 118–138; these read WHLP…YTLL and PMVS…AAIV. One can recognise a Ferric oxidoreductase domain in the interval 117-264; the sequence is LPMVSITLLA…TLGIVSLLLG (148 aa). FAD is bound by residues Gln139 and Arg160. 4 helical membrane-spanning segments follow: residues 163-183, 217-237, 252-272, and 290-310; these read FGLL…SYPM, IYVS…VTSI, IQST…LIFA, and FMIA…LLLP. His174 provides a ligand contact to heme b. FAD-binding residues include Ser236 and Gln253. Position 267 (His267) interacts with heme b.

This sequence belongs to the STEAP family. As to quaternary structure, homotrimer. Requires FAD as cofactor. Heme b serves as cofactor.

The protein resides in the endosome membrane. It is found in the cell membrane. Does not function as a metalloreductase due to the absence of binding sites for the electron-donating substrate NADPH. The protein is STEAP1 protein (STEAP1) of Sus scrofa (Pig).